Reading from the N-terminus, the 1060-residue chain is MPTIPGFSQIQFEGFCRFIDQGLTEELHKFPKIEDTDQEIEFQLFVETYQLVEPLIKERDAVYESLTYSSELYVSAGLIWKTGRDMQEQTIFIGNIPLMNSLGNSIVSGIYRIVINQILQSPGIYYRSELDHNGISVYTGTIISDWGGRPELEIDRKARIWARVSRKQKISILVPSSAMGSNLREILDNVCYPEIFLSFPNDKEKKKIGSRENAILEFYKQFACVGGDPVFSESLCKELQKKFFQQRCELGRIGRRNMNRRLNIDIPQNNTFLLPRDVLAVVDHLIGMKFGMGTLDDMNHLKNKRIRSVADLLQDQFGLALVRLENAVRGTICGAIRHKLIPTPHNLVTSTPLTTTYESFFGLHPLSQVLDRTNPLTQIVHGRKSSYLGPGGLTGRTASFRIRDIHPSHYGRICPIDTSEGINVGLIGSLAIHARIGHWGSIESPFYEISEKSKEIVYLPPSRDEYYMVAAGNSLALNRGIQEEQVVPARYRQEFLTIAWEQIHLRSIFPFQYFSIGASLIPFIEHNDANRALMSSNMQRQAVPLSRSEKCIVGTGLEGQAALDSGVSAIAEHEGKIIYTDTDKIVLSGNRDTISIPLVMYQRSNKNTCMHQKPRVPRGKCIKKGQILADGAATVGGELALGKNVLVAHMPWEGYNSEDAVLISERLIYGDIYTSFHIRKYEIQTHVTSQGPERITNEIPHLEAHLLRNLDKNGIVMLGSWIERGDILVGKLTPQAAKESSYAPEDRLLRAILGIQVSTAKETCLKLPIGGRGRVIDVRWIQKKGGSSYNPETIRVSILQKREIKVGDKVAGRHGNKGIVSKILPRQDMPYLQDGTPVDMVFNPLGVPSRMNVGQMFECSLGLAGYLLDKHYRIAPFDERYEQEASRKLVFPELYSASKQTVNPWVFEPEYPGKSRIFDGRTGDPFEQPVIIGKSYILKLIHQVDDKIHGRSSGHYALVTQQPLRGRAKQGGQRVGEMEVWALEGFGVAHISQEMLTYKSDHIRARQEVLGATIIGGTIPKPEDAPESFRLLVRELRSLALELNHFLVSEKNFQINRKEA.

It belongs to the RNA polymerase beta chain family. As to quaternary structure, in plastids the minimal PEP RNA polymerase catalytic core is composed of four subunits: alpha, beta, beta', and beta''. When a (nuclear-encoded) sigma factor is associated with the core the holoenzyme is formed, which can initiate transcription.

The protein resides in the plastid. It is found in the chloroplast. The catalysed reaction is RNA(n) + a ribonucleoside 5'-triphosphate = RNA(n+1) + diphosphate. DNA-dependent RNA polymerase catalyzes the transcription of DNA into RNA using the four ribonucleoside triphosphates as substrates. This chain is DNA-directed RNA polymerase subunit beta, found in Calycanthus floridus var. glaucus (Eastern sweetshrub).